The chain runs to 219 residues: Interleukin-12 subunit alpha (219 aa).

The signal sequence occupies residues 1 to 22 (MCPARSLLLVATLVLLDYLSLA). N-linked (GlcNAc...) asparagine glycans are attached at residues N24, N93, and N107. 3 cysteine pairs are disulfide-bonded: C37–C110, C64–C196, and C85–C123.

This sequence belongs to the IL-6 superfamily. As to quaternary structure, heterodimer with IL12B; disulfide-linked. This heterodimer is known as interleukin IL-12. Heterodimer with EBI3/IL27B; not disulfide-linked. This heterodimer is known as interleukin IL-35. Interacts with NBR1; this interaction promotes IL-12 secretion.

It localises to the secreted. In terms of biological role, heterodimerizes with IL12B to form the IL-12 cytokine or with EBI3/IL27B to form the IL-35 cytokine. IL-12 is primarily produced by professional antigen-presenting cells (APCs) such as B-cells and dendritic cells (DCs) as well as macrophages and granulocytes and regulates T-cell and natural killer-cell responses, induces the production of interferon-gamma (IFN-gamma), favors the differentiation of T-helper 1 (Th1) cells and is an important link between innate resistance and adaptive immunity. Mechanistically, exerts its biological effects through a receptor composed of IL12R1 and IL12R2 subunits. Binding to the receptor results in the rapid tyrosine phosphorylation of a number of cellular substrates including the JAK family kinases TYK2 and JAK2. In turn, recruited STAT4 gets phosphorylated and translocates to the nucleus where it regulates cytokine/growth factor responsive genes. As part of IL-35, plays essential roles in maintaining the immune homeostasis of the liver microenvironment and also functions as an immune-suppressive cytokine. Mediates biological events through unconventional receptors composed of IL12RB2 and gp130/IL6ST heterodimers or homodimers. Signaling requires the transcription factors STAT1 and STAT4, which form a unique heterodimer that binds to distinct DNA sites. The protein is Interleukin-12 subunit alpha (IL12A) of Cercocebus atys (Sooty mangabey).